The chain runs to 341 residues: KH domain-containing RNA-binding protein qki.S (341 aa).

The KH domain maps to 88-154 (YVPVKEYPDF…WEHLNEDLHV (67 aa)). The short motif at 324 to 330 (RVHPYQR) is the Nuclear localization signal element.

It belongs to the quaking family. In terms of assembly, homodimer; does not require RNA to homodimerize.

It localises to the nucleus. It is found in the cytoplasm. Its function is as follows. RNA reader protein, which recognizes and binds specific RNAs, thereby regulating RNA metabolic processes, such as pre-mRNA splicing, circular RNA (circRNA) formation, mRNA export, mRNA stability and/or translation. Involved in various cellular processes, such as mRNA storage into stress granules, apoptosis, interferon response, glial cell fate and development. Binds to the 5'-NACUAAY-N(1,20)-UAAY-3' RNA core sequence. Acts as a mRNA modification reader that specifically recognizes and binds mRNA transcripts modified by internal N(7)-methylguanine (m7G). Promotes the formation of circular RNAs (circRNAs): acts by binding to sites flanking circRNA-forming exons. CircRNAs are produced by back-splicing circularization of pre-mRNAs. Required to protect and promote stability of mRNAs which promotes oligodendrocyte differentiation. Acts as an important regulator of muscle development. Essential for notochord development. This is KH domain-containing RNA-binding protein qki.S from Xenopus laevis (African clawed frog).